We begin with the raw amino-acid sequence, 476 residues long: Bifunctional protein HldE (476 aa).

The tract at residues methionine 1–serine 319 is ribokinase. Asparagine 195–glutamate 198 contacts ATP. Aspartate 264 is a catalytic residue. The tract at residues methionine 345–glutamine 476 is cytidylyltransferase.

It in the N-terminal section; belongs to the carbohydrate kinase PfkB family. The protein in the C-terminal section; belongs to the cytidylyltransferase family. Homodimer.

It carries out the reaction D-glycero-beta-D-manno-heptose 7-phosphate + ATP = D-glycero-beta-D-manno-heptose 1,7-bisphosphate + ADP + H(+). It catalyses the reaction D-glycero-beta-D-manno-heptose 1-phosphate + ATP + H(+) = ADP-D-glycero-beta-D-manno-heptose + diphosphate. It functions in the pathway nucleotide-sugar biosynthesis; ADP-L-glycero-beta-D-manno-heptose biosynthesis; ADP-L-glycero-beta-D-manno-heptose from D-glycero-beta-D-manno-heptose 7-phosphate: step 1/4. The protein operates within nucleotide-sugar biosynthesis; ADP-L-glycero-beta-D-manno-heptose biosynthesis; ADP-L-glycero-beta-D-manno-heptose from D-glycero-beta-D-manno-heptose 7-phosphate: step 3/4. Its function is as follows. Catalyzes the phosphorylation of D-glycero-D-manno-heptose 7-phosphate at the C-1 position to selectively form D-glycero-beta-D-manno-heptose-1,7-bisphosphate. In terms of biological role, catalyzes the ADP transfer from ATP to D-glycero-beta-D-manno-heptose 1-phosphate, yielding ADP-D-glycero-beta-D-manno-heptose. The protein is Bifunctional protein HldE of Shewanella baltica (strain OS155 / ATCC BAA-1091).